We begin with the raw amino-acid sequence, 408 residues long: Imidazolonepropionase (408 aa).

Fe(3+) contacts are provided by His72 and His74. Zn(2+) is bound by residues His72 and His74. The 4-imidazolone-5-propanoate site is built by Arg81, Tyr144, and His177. Tyr144 contributes to the N-formimidoyl-L-glutamate binding site. His242 lines the Fe(3+) pocket. Position 242 (His242) interacts with Zn(2+). Gln245 contributes to the 4-imidazolone-5-propanoate binding site. Asp317 provides a ligand contact to Fe(3+). Asp317 contacts Zn(2+). Residues Asn319 and Gly321 each contribute to the N-formimidoyl-L-glutamate site. Thr322 is a binding site for 4-imidazolone-5-propanoate.

Belongs to the metallo-dependent hydrolases superfamily. HutI family. It depends on Zn(2+) as a cofactor. Requires Fe(3+) as cofactor.

It is found in the cytoplasm. It catalyses the reaction 4-imidazolone-5-propanoate + H2O = N-formimidoyl-L-glutamate. It functions in the pathway amino-acid degradation; L-histidine degradation into L-glutamate; N-formimidoyl-L-glutamate from L-histidine: step 3/3. Catalyzes the hydrolytic cleavage of the carbon-nitrogen bond in imidazolone-5-propanoate to yield N-formimidoyl-L-glutamate. It is the third step in the universal histidine degradation pathway. This Aliivibrio fischeri (strain MJ11) (Vibrio fischeri) protein is Imidazolonepropionase.